Reading from the N-terminus, the 188-residue chain is Photosystem I assembly protein Ycf4 (188 aa).

2 helical membrane passes run 26–48 (FFWA…SSYF) and 63–85 (FIPQ…GYLW).

The protein belongs to the Ycf4 family.

It is found in the cellular thylakoid membrane. Functionally, seems to be required for the assembly of the photosystem I complex. The protein is Photosystem I assembly protein Ycf4 of Synechocystis sp. (strain ATCC 27184 / PCC 6803 / Kazusa).